A 305-amino-acid polypeptide reads, in one-letter code: Protoheme IX farnesyltransferase 1 (305 aa).

A run of 8 helical transmembrane segments spans residues 22–42 (IKTGIIKSNLVPMFAGLTLAL), 53–73 (IPEILFAFIGSILIIGAAGAF), 94–114 (VTGDISPKTALWLGIFMTIFG), 115–135 (LVFLALTTYLAAILGFIGLFL), 154–174 (IGSVSGAMPPLIGWAAIYPDV), 179–199 (IIGLFIIMIIWQMPHFYAIAI), 230–250 (LVILIIISILLGSLSIGLMLV), and 283–303 (LFHMTILFSTVIIYSLVGIFF).

The protein belongs to the UbiA prenyltransferase family. Protoheme IX farnesyltransferase subfamily. As to quaternary structure, interacts with CtaA.

The protein localises to the cell membrane. It carries out the reaction heme b + (2E,6E)-farnesyl diphosphate + H2O = Fe(II)-heme o + diphosphate. It functions in the pathway porphyrin-containing compound metabolism; heme O biosynthesis; heme O from protoheme: step 1/1. Its function is as follows. Converts heme B (protoheme IX) to heme O by substitution of the vinyl group on carbon 2 of heme B porphyrin ring with a hydroxyethyl farnesyl side group. In Bacillus cytotoxicus (strain DSM 22905 / CIP 110041 / 391-98 / NVH 391-98), this protein is Protoheme IX farnesyltransferase 1.